We begin with the raw amino-acid sequence, 394 residues long: MGREPEMEEARENGGVGGSVLPLASLISPTGNEVQISELEGKIIGLYFAANWYPKCEAFTPALTAAYHQLKEHGAGFEVIFVSCDENRPSFERFHRAMPWPAVPFGDIGCKKRLSERFQVEGIPRLVVLAPNGEVVQPDAVELVHRYGDRAFPFTSARVAELEADEQRKFASQTLEKIFSVSGKDYVNGSQEQVPISSLVGKTVGLYFSAHRCAPCIKFTAKLAAIYSNLKGKAEDFEIIYIPMDKEEDGYLRSCSDMPWLALPYDDGASSGALARYFDVREIPTLVVVGPDGKTVTREGRNLVNLYFDMAFPFTDEQIRLLQEMEDEDAKGYPPSLRHTGHRHELSIVSDKSGGGPYICCECDEQGLGWAYQCIACGYEIHLRCGRDMEGRAE.

Thioredoxin domains lie at 15 to 176 (GVGG…QTLE) and 180 to 327 (SVSG…EMED).

Belongs to the nucleoredoxin family.

It catalyses the reaction [protein]-dithiol + NAD(+) = [protein]-disulfide + NADH + H(+). The enzyme catalyses [protein]-dithiol + NADP(+) = [protein]-disulfide + NADPH + H(+). In terms of biological role, probable thiol-disulfide oxidoreductase that may participate in various redox reactions. This is Probable nucleoredoxin 2 from Oryza sativa subsp. japonica (Rice).